Reading from the N-terminus, the 165-residue chain is Transcriptional regulator MraZ (165 aa).

SpoVT-AbrB domains are found at residues 5 to 51 and 80 to 123; these read TYEG…GEEL and SAEL…NPER.

It belongs to the MraZ family. Forms oligomers.

The protein localises to the cytoplasm. It localises to the nucleoid. The polypeptide is Transcriptional regulator MraZ (Hyphomonas neptunium (strain ATCC 15444)).